A 279-amino-acid polypeptide reads, in one-letter code: Vitamin B12-binding protein (279 aa).

Residues 1–20 form the signal peptide; the sequence is MTFRFLCWLTGLLLCTAAYA. A Fe/B12 periplasmic-binding domain is found at 24-276; the sequence is RVISLAPHAT…QLAELKLAPS (253 aa). A disulfide bridge links C189 with C265.

This sequence belongs to the BtuF family. As to quaternary structure, the complex is composed of two ATP-binding proteins (BtuD), two transmembrane proteins (BtuC) and a solute-binding protein (BtuF).

It localises to the periplasm. Functionally, part of the ABC transporter complex BtuCDF involved in vitamin B12 import. Binds vitamin B12 and delivers it to the periplasmic surface of BtuC. The sequence is that of Vitamin B12-binding protein from Pectobacterium atrosepticum (strain SCRI 1043 / ATCC BAA-672) (Erwinia carotovora subsp. atroseptica).